Reading from the N-terminus, the 119-residue chain is uncharacterized protein (119 aa).

The tract at residues 78-119 is disordered; that stretch reads SHRKSQQHQTQGNQVLRGTRKLESPTVGPRPGLRRQHTRNFL. Polar residues predominate over residues 84-93; that stretch reads QHQTQGNQVL. Residues 109–119 show a composition bias toward basic residues; that stretch reads GLRRQHTRNFL.

This is an uncharacterized protein from Saccharomyces cerevisiae (strain ATCC 204508 / S288c) (Baker's yeast).